The sequence spans 305 residues: N-acyl-aromatic-L-amino acid amidohydrolase (carboxylate-forming) (305 aa).

The Zn(2+) site is built by His-15 and Glu-18. Substrate-binding positions include Arg-57 and 64-65; that span reads NR. Position 108 (His-108) interacts with Zn(2+). Residues Glu-171 and Tyr-281 each coordinate substrate.

The protein belongs to the AspA/AstE family. Aspartoacylase subfamily. In terms of assembly, homotetramer. Zn(2+) is required as a cofactor.

The protein localises to the apical cell membrane. It is found in the cytoplasm. It catalyses the reaction an N-acyl-aromatic L-alpha-amino acid + H2O = an aromatic L-alpha-amino acid + a carboxylate. It carries out the reaction an N-acetyl-L-cysteine-S-conjugate + H2O = an S-substituted L-cysteine + acetate. In terms of biological role, plays an important role in deacetylating mercapturic acids in kidney proximal tubules. The sequence is that of N-acyl-aromatic-L-amino acid amidohydrolase (carboxylate-forming) (acy3) from Xenopus laevis (African clawed frog).